Consider the following 551-residue polypeptide: NAD(P)H-quinone oxidoreductase chain 4 (551 aa).

Transmembrane regions (helical) follow at residues 25 to 45 (FPWL…VPFI), 56 to 76 (WFAL…YLNG), 111 to 131 (LILL…PVTF), 133 to 153 (PKLF…VFAV), 157 to 177 (LLFF…LAIW), 189 to 209 (FILY…AMGF), 233 to 253 (LLCY…VPLH), 264 to 284 (TAPV…YALM), 298 to 318 (FAPL…LTSF), 335 to 355 (MGFV…GAML), 356 to 376 (QMIS…ATYD), 397 to 417 (FALW…SGFV), 438 to 458 (IVID…LLSM), and 485 to 505 (VYII…PRLM).

Belongs to the complex I subunit 4 family.

It is found in the cellular thylakoid membrane. The catalysed reaction is a plastoquinone + NADH + (n+1) H(+)(in) = a plastoquinol + NAD(+) + n H(+)(out). It catalyses the reaction a plastoquinone + NADPH + (n+1) H(+)(in) = a plastoquinol + NADP(+) + n H(+)(out). Its function is as follows. NDH-1 shuttles electrons from NAD(P)H, via FMN and iron-sulfur (Fe-S) centers, to quinones in the respiratory chain. The immediate electron acceptor for the enzyme in this species is believed to be plastoquinone. Couples the redox reaction to proton translocation (for every two electrons transferred, four hydrogen ions are translocated across the cytoplasmic membrane), and thus conserves the redox energy in a proton gradient. This chain is NAD(P)H-quinone oxidoreductase chain 4, found in Synechococcus sp. (strain WH7803).